Here is a 473-residue protein sequence, read N- to C-terminus: Photosystem II CP43 reaction center protein (473 aa).

Residues 1 to 14 (MKTLYSLRRFYHVE) constitute a propeptide that is removed on maturation. At T15 the chain carries N-acetylthreonine. At T15 the chain carries Phosphothreonine. Transmembrane regions (helical) follow at residues 69-93 (LFEVAHFVPEKPMYEQGLILLPHLA), 134-155 (LLGPETLEESFPFFGYVWKDRN), 178-200 (KALYFGGVYDTWAPGGGDVRKIT), 255-275 (KPFAWARRALVWSGEAYLSYS), and 291-312 (WFNNTAYPSEFYGPTGPEASQA). E367 contacts [CaMn4O5] cluster. The helical transmembrane segment at 447–471 (RARAAAAGFEKGIDRDLEPVLFMTP) threads the bilayer.

It belongs to the PsbB/PsbC family. PsbC subfamily. As to quaternary structure, PSII is composed of 1 copy each of membrane proteins PsbA, PsbB, PsbC, PsbD, PsbE, PsbF, PsbH, PsbI, PsbJ, PsbK, PsbL, PsbM, PsbT, PsbX, PsbY, PsbZ, Psb30/Ycf12, at least 3 peripheral proteins of the oxygen-evolving complex and a large number of cofactors. It forms dimeric complexes. Binds multiple chlorophylls and provides some of the ligands for the Ca-4Mn-5O cluster of the oxygen-evolving complex. It may also provide a ligand for a Cl- that is required for oxygen evolution. PSII binds additional chlorophylls, carotenoids and specific lipids. serves as cofactor.

Its subcellular location is the plastid. It is found in the chloroplast thylakoid membrane. One of the components of the core complex of photosystem II (PSII). It binds chlorophyll and helps catalyze the primary light-induced photochemical processes of PSII. PSII is a light-driven water:plastoquinone oxidoreductase, using light energy to abstract electrons from H(2)O, generating O(2) and a proton gradient subsequently used for ATP formation. The chain is Photosystem II CP43 reaction center protein from Carica papaya (Papaya).